We begin with the raw amino-acid sequence, 268 residues long: Thiazole synthase (268 aa).

Lys100 functions as the Schiff-base intermediate with DXP in the catalytic mechanism. Residues Gly161, 187-188, and 209-210 each bind 1-deoxy-D-xylulose 5-phosphate; these read AG and NT. The interval 248 to 268 is disordered; sequence ATPSSPSEGMITGSPHSAANN.

The protein belongs to the ThiG family. As to quaternary structure, homotetramer. Forms heterodimers with either ThiH or ThiS.

The protein localises to the cytoplasm. The catalysed reaction is [ThiS sulfur-carrier protein]-C-terminal-Gly-aminoethanethioate + 2-iminoacetate + 1-deoxy-D-xylulose 5-phosphate = [ThiS sulfur-carrier protein]-C-terminal Gly-Gly + 2-[(2R,5Z)-2-carboxy-4-methylthiazol-5(2H)-ylidene]ethyl phosphate + 2 H2O + H(+). It participates in cofactor biosynthesis; thiamine diphosphate biosynthesis. Catalyzes the rearrangement of 1-deoxy-D-xylulose 5-phosphate (DXP) to produce the thiazole phosphate moiety of thiamine. Sulfur is provided by the thiocarboxylate moiety of the carrier protein ThiS. In vitro, sulfur can be provided by H(2)S. The protein is Thiazole synthase of Nitrosomonas eutropha (strain DSM 101675 / C91 / Nm57).